A 359-amino-acid polypeptide reads, in one-letter code: Squamosa promoter-binding-like protein 13A (359 aa).

The tract at residues 75–94 (AKPEGSRSSSSKRTRGNGVG) is disordered. The SBP-type zinc finger occupies 98–175 (MPICLVDGCD…DGHNRRRRKP (78 aa)). Residues Cys-101, Cys-106, Cys-123, His-126, Cys-142, Cys-145, His-149, and Cys-161 each contribute to the Zn(2+) site. The short motif at 158–174 (KRSCRKRLDGHNRRRRK) is the Bipartite nuclear localization signal element.

Requires Zn(2+) as cofactor.

The protein resides in the nucleus. In terms of biological role, trans-acting factor that binds specifically to the consensus nucleotide sequence 5'-TNCGTACAA-3'. This chain is Squamosa promoter-binding-like protein 13A (SPL13A), found in Arabidopsis thaliana (Mouse-ear cress).